Consider the following 375-residue polypeptide: tRNA(Met) cytidine acetate ligase (375 aa).

Residues 7 to 20 (VVEYNPFHNGHRYH), glycine 101, asparagine 151, and arginine 176 contribute to the ATP site.

It belongs to the TmcAL family.

The protein localises to the cytoplasm. The catalysed reaction is cytidine(34) in elongator tRNA(Met) + acetate + ATP = N(4)-acetylcytidine(34) in elongator tRNA(Met) + AMP + diphosphate. Functionally, catalyzes the formation of N(4)-acetylcytidine (ac(4)C) at the wobble position of elongator tRNA(Met), using acetate and ATP as substrates. First activates an acetate ion to form acetyladenylate (Ac-AMP) and then transfers the acetyl group to tRNA to form ac(4)C34. The polypeptide is tRNA(Met) cytidine acetate ligase (Limosilactobacillus fermentum (strain NBRC 3956 / LMG 18251) (Lactobacillus fermentum)).